We begin with the raw amino-acid sequence, 282 residues long: Putative hydrolase Bcep18194_B0137 (282 aa).

Mg(2+) contacts are provided by Glu-124, Glu-126, and Asp-155.

The protein belongs to the FAH family. Requires Mg(2+) as cofactor.

This is Putative hydrolase Bcep18194_B0137 from Burkholderia lata (strain ATCC 17760 / DSM 23089 / LMG 22485 / NCIMB 9086 / R18194 / 383).